The sequence spans 202 residues: Putative 3-methyladenine DNA glycosylase (202 aa).

Belongs to the DNA glycosylase MPG family.

This Rhodopseudomonas palustris (strain BisB5) protein is Putative 3-methyladenine DNA glycosylase.